The sequence spans 102 residues: MAKQKIRIRLKAYEHRILDQSADKIVETAKRTGAGISGPIPLPTERTIYTVLRSPHKFKDSREQFEMRTHKRLIDIVNPTPKTVDSLMKLDLPSGVDIEIKL.

The protein belongs to the universal ribosomal protein uS10 family. Part of the 30S ribosomal subunit.

In terms of biological role, involved in the binding of tRNA to the ribosomes. This is Small ribosomal subunit protein uS10 from Levilactobacillus brevis (strain ATCC 367 / BCRC 12310 / CIP 105137 / JCM 1170 / LMG 11437 / NCIMB 947 / NCTC 947) (Lactobacillus brevis).